A 184-amino-acid polypeptide reads, in one-letter code: Peptide deformylase (184 aa).

Residues Cys99 and His141 each coordinate Fe cation. Residue Glu142 is part of the active site. His145 provides a ligand contact to Fe cation.

It belongs to the polypeptide deformylase family. Fe(2+) serves as cofactor.

It carries out the reaction N-terminal N-formyl-L-methionyl-[peptide] + H2O = N-terminal L-methionyl-[peptide] + formate. Functionally, removes the formyl group from the N-terminal Met of newly synthesized proteins. Requires at least a dipeptide for an efficient rate of reaction. N-terminal L-methionine is a prerequisite for activity but the enzyme has broad specificity at other positions. In Chlamydia abortus (strain DSM 27085 / S26/3) (Chlamydophila abortus), this protein is Peptide deformylase.